The following is a 289-amino-acid chain: 4-diphosphocytidyl-2-C-methyl-D-erythritol kinase (289 aa).

The active site involves K10. 94 to 104 (PVAAGLAGGSS) lines the ATP pocket. D136 is an active-site residue.

Belongs to the GHMP kinase family. IspE subfamily.

The enzyme catalyses 4-CDP-2-C-methyl-D-erythritol + ATP = 4-CDP-2-C-methyl-D-erythritol 2-phosphate + ADP + H(+). It participates in isoprenoid biosynthesis; isopentenyl diphosphate biosynthesis via DXP pathway; isopentenyl diphosphate from 1-deoxy-D-xylulose 5-phosphate: step 3/6. In terms of biological role, catalyzes the phosphorylation of the position 2 hydroxy group of 4-diphosphocytidyl-2C-methyl-D-erythritol. This is 4-diphosphocytidyl-2-C-methyl-D-erythritol kinase from Bacillus anthracis (strain CDC 684 / NRRL 3495).